Here is a 155-residue protein sequence, read N- to C-terminus: Histone H2B.5 (155 aa).

Basic and acidic residues-rich tracts occupy residues 1–28 (MAPK…EKAP) and 36–54 (EKRL…GKKD). Positions 1-63 (MAPKAEKKPA…DRAGRKKAKK (63 aa)) are disordered. 2 positions are modified to N6-acetyllysine: K7 and K37. K151 is covalently cross-linked (Glycyl lysine isopeptide (Lys-Gly) (interchain with G-Cter in ubiquitin)).

Belongs to the histone H2B family. In terms of assembly, the nucleosome is a histone octamer containing two molecules each of H2A, H2B, H3 and H4 assembled in one H3-H4 heterotetramer and two H2A-H2B heterodimers. The octamer wraps approximately 147 bp of DNA. In terms of processing, can be acetylated to form H2BK6ac and H2BK33ac. Monoubiquitinated by BRE1 to form H2BK143ub1 and deubiquitinated by UBP26. Required for heterochromatic histone H3 di- and trimethylation at H3K4me. May give a specific tag for epigenetic transcriptional activation.

It localises to the nucleus. Its subcellular location is the chromosome. Its function is as follows. Core component of nucleosome. Nucleosomes wrap and compact DNA into chromatin, limiting DNA accessibility to the cellular machineries which require DNA as a template. Histones thereby play a central role in transcription regulation, DNA repair, DNA replication and chromosomal stability. DNA accessibility is regulated via a complex set of post-translational modifications of histones, also called histone code, and nucleosome remodeling. The protein is Histone H2B.5 (H2B.5) of Oryza sativa subsp. japonica (Rice).